We begin with the raw amino-acid sequence, 141 residues long: Protein C19orf12 homolog (141 aa).

A helical membrane pass occupies residues 33-53 (LVAAAGAFLGGLVGGPPGIAV).

Belongs to the C19orf12 family.

The protein resides in the mitochondrion. It localises to the mitochondrion membrane. The protein localises to the endoplasmic reticulum. Its subcellular location is the cytoplasm. It is found in the cytosol. In Xenopus tropicalis (Western clawed frog), this protein is Protein C19orf12 homolog.